The following is a 121-amino-acid chain: Chronic lymphocytic leukemia up-regulated protein 1 (121 aa).

As to expression, specifically expressed in chronic lymphocytic leukemia (CLL) cells from patients without immunoglobulin heavy-chain hypermutations. Expression is detected in all CLL cells and levels are similar in patients before and after treatment.

It is found in the cytoplasm. The protein is Chronic lymphocytic leukemia up-regulated protein 1 (CLLU1) of Homo sapiens (Human).